Consider the following 398-residue polypeptide: Protein RecA (398 aa).

83 to 90 (GPESSGKT) provides a ligand contact to ATP. The segment at 351–398 (AGQKNDKKSKLEEKANAGAGISEASEPDSSAEEDFEEFAPIDIGSLGE) is disordered. Residues 354-365 (KNDKKSKLEEKA) are compositionally biased toward basic and acidic residues. Residues 375-389 (SEPDSSAEEDFEEFA) are compositionally biased toward acidic residues.

Belongs to the RecA family.

The protein localises to the cytoplasm. Can catalyze the hydrolysis of ATP in the presence of single-stranded DNA, the ATP-dependent uptake of single-stranded DNA by duplex DNA, and the ATP-dependent hybridization of homologous single-stranded DNAs. It interacts with LexA causing its activation and leading to its autocatalytic cleavage. This is Protein RecA from Ruminococcus albus (strain ATCC 27210 / DSM 20455 / JCM 14654 / NCDO 2250 / 7).